A 913-amino-acid chain; its full sequence is DNA polymerase I (913 aa).

Positions 1-305 (MSQAPLVLVD…AGENGEAETP (305 aa)) constitute a 5'-3' exonuclease domain. In terms of domain architecture, 3'-5' exonuclease spans 306–501 (IQAEVDYDVV…LHQALWQKLE (196 aa)). Residues 505 to 913 (SLARVLTDIE…GVGSNWDEAH (409 aa)) are polymerase.

Belongs to the DNA polymerase type-A family. Single-chain monomer with multiple functions.

The enzyme catalyses DNA(n) + a 2'-deoxyribonucleoside 5'-triphosphate = DNA(n+1) + diphosphate. Functionally, in addition to polymerase activity, this DNA polymerase exhibits 3'-5' and 5'-3' exonuclease activity. The protein is DNA polymerase I (polA) of Pseudomonas aeruginosa (strain ATCC 15692 / DSM 22644 / CIP 104116 / JCM 14847 / LMG 12228 / 1C / PRS 101 / PAO1).